The primary structure comprises 455 residues: Nuclear mRNA export protein THP1 (455 aa).

Positions 220 to 431 (IEYRYLLGRY…QLCVVKKTTM (212 aa)) constitute a PCI domain.

In terms of assembly, heterodimer with THP1. The SAC3-THP1 complex interacts with CDC31 and SUS1, and with the mRNA export factor MEX67-MTR2, the TREX complex component SUB2, and the nucleoporin NUP1.

It localises to the nucleus envelope. Component of the SAC3-THP1 complex, which functions in transcription-coupled mRNA export from the nucleus to the cytoplasm. SAC3-THP1 functions in docking export-competent ribonucleoprotein particles (mRNPs) to the nuclear entrance of the nuclear pore complex (nuclear basket), by association with components of the nuclear mRNA export machinery (MEX67-MTR2 and SUB2) in the nucleoplasm and the nucleoporin NUP1 at the nuclear basket. THP1 binds to RNA in vitro. The sequence is that of Nuclear mRNA export protein THP1 (THP1) from Saccharomyces cerevisiae (strain ATCC 204508 / S288c) (Baker's yeast).